Reading from the N-terminus, the 258-residue chain is tRNA (guanine-N(1)-)-methyltransferase (258 aa).

S-adenosyl-L-methionine-binding positions include glycine 122 and 142-147; that span reads LGDFVL.

Belongs to the RNA methyltransferase TrmD family. In terms of assembly, homodimer.

It is found in the cytoplasm. The enzyme catalyses guanosine(37) in tRNA + S-adenosyl-L-methionine = N(1)-methylguanosine(37) in tRNA + S-adenosyl-L-homocysteine + H(+). In terms of biological role, specifically methylates guanosine-37 in various tRNAs. This is tRNA (guanine-N(1)-)-methyltransferase from Hahella chejuensis (strain KCTC 2396).